A 494-amino-acid polypeptide reads, in one-letter code: Transcription termination factor MTERF4, chloroplastic (494 aa).

The transit peptide at 1-54 (MMKSLLFSAHPTSLLLPAPRLRRLLRLRAASSASASAPPRADRRSPGTPSRRPS) directs the protein to the chloroplast. 2 disordered regions span residues 32–61 (SASA…YARP) and 457–494 (VEEM…EFVR). Residues 46–56 (PGTPSRRPSSS) show a composition bias toward low complexity. Composition is skewed to acidic residues over residues 457-466 (VEEMEREDSS) and 473-494 (DEVE…EFVR).

The protein belongs to the mTERF family.

The protein resides in the plastid. It localises to the chloroplast stroma. In terms of biological role, transcription termination factor required for processing and steady-state levels of plastid transcripts. Required for splicing of the chloroplastic group II intron. Required for the accumulation of 16S and 23S ribosomes. The polypeptide is Transcription termination factor MTERF4, chloroplastic (Zea mays (Maize)).